Here is a 348-residue protein sequence, read N- to C-terminus: D-alanine--D-alanine ligase (348 aa).

The ATP-grasp domain maps to 132 to 334 (KRVLESAGIA…YPDLIEKLVA (203 aa)). 162–217 (EEKLSYPVFTKPSNMGSSVGISKSDNQEELRASLDLAFKYDSRVLVEQGVTAREIE) lines the ATP pocket. Positions 288, 301, and 303 each coordinate Mg(2+).

It belongs to the D-alanine--D-alanine ligase family. It depends on Mg(2+) as a cofactor. Requires Mn(2+) as cofactor.

It localises to the cytoplasm. The enzyme catalyses 2 D-alanine + ATP = D-alanyl-D-alanine + ADP + phosphate + H(+). The protein operates within cell wall biogenesis; peptidoglycan biosynthesis. Cell wall formation. This chain is D-alanine--D-alanine ligase, found in Streptococcus gordonii (strain Challis / ATCC 35105 / BCRC 15272 / CH1 / DL1 / V288).